Consider the following 213-residue polypeptide: LexA repressor 2 (213 aa).

A DNA-binding region (H-T-H motif) is located at residues 27-47 (QTEIARAFGFKGVRAAQYHLE). Residues serine 133 and lysine 170 each act as for autocatalytic cleavage activity in the active site.

Belongs to the peptidase S24 family. As to quaternary structure, homodimer.

The enzyme catalyses Hydrolysis of Ala-|-Gly bond in repressor LexA.. Its function is as follows. Represses a number of genes involved in the response to DNA damage (SOS response), including recA and lexA. In the presence of single-stranded DNA, RecA interacts with LexA causing an autocatalytic cleavage which disrupts the DNA-binding part of LexA, leading to derepression of the SOS regulon and eventually DNA repair. The sequence is that of LexA repressor 2 from Xanthomonas oryzae pv. oryzae (strain KACC10331 / KXO85).